We begin with the raw amino-acid sequence, 300 residues long: Cell shape-determining protein MreC (300 aa).

Residues 1-17 (MARDRTRPEDFTRPLRR) lie on the Cytoplasmic side of the membrane. A helical transmembrane segment spans residues 18–38 (ILVGGLVLLLLGIFLIWRIDS). At 39 to 300 (PRVEQFRAAL…APAAVEGADG (262 aa)) the chain is on the periplasmic side. A coiled-coil region spans residues 74–117 (QSYTRIYEQNQELRRELQQMKAWKEAALQLEQKNARLLDLNQVR). Residues 277-300 (SDPGKLVAEPPAPPAPAAVEGADG) are disordered.

It belongs to the MreC family.

Its subcellular location is the cell inner membrane. Its function is as follows. Involved in formation and maintenance of cell shape. The chain is Cell shape-determining protein MreC from Cereibacter sphaeroides (Rhodobacter sphaeroides).